The chain runs to 673 residues: DNA ligase (673 aa).

NAD(+) is bound by residues 32–36 (DHVYD), 81–82 (SL), and E111. The active-site N6-AMP-lysine intermediate is K113. Positions 134, 171, 286, and 310 each coordinate NAD(+). C404, C407, C422, and C428 together coordinate Zn(2+). One can recognise a BRCT domain in the interval 595-673 (NIIDEYKNKT…NEFWKKDNNF (79 aa)).

Belongs to the NAD-dependent DNA ligase family. LigA subfamily. Mg(2+) is required as a cofactor. The cofactor is Mn(2+).

It catalyses the reaction NAD(+) + (deoxyribonucleotide)n-3'-hydroxyl + 5'-phospho-(deoxyribonucleotide)m = (deoxyribonucleotide)n+m + AMP + beta-nicotinamide D-nucleotide.. DNA ligase that catalyzes the formation of phosphodiester linkages between 5'-phosphoryl and 3'-hydroxyl groups in double-stranded DNA using NAD as a coenzyme and as the energy source for the reaction. It is essential for DNA replication and repair of damaged DNA. This Ureaplasma urealyticum serovar 10 (strain ATCC 33699 / Western) protein is DNA ligase.